The primary structure comprises 1138 residues: Nuclear pore complex-interacting protein family member B13 (1138 aa).

The chain crosses the membrane as a helical span at residues 73–93; the sequence is VVITLWIVYLWVSLLKTIFWS. Disordered regions lie at residues 242–578 and 747–1138; these read RMGH…NIKT and ERLR…RRLS. Polar residues predominate over residues 252-263; sequence QQHSITDNSLSL. Positions 349–359 are enriched in pro residues; the sequence is PLPPSAPPSAP. Composition is skewed to basic and acidic residues over residues 406–416, 448–458, 490–500, 532–542, 782–792, 824–834, 866–876, 908–918, 950–960, and 992–1002; these read DNIKTPAERLR.

This sequence belongs to the NPIP family.

It localises to the membrane. This is Nuclear pore complex-interacting protein family member B13 from Homo sapiens (Human).